The primary structure comprises 210 residues: Large ribosomal subunit protein uL4 (210 aa).

Residues 46-85 (QGTASTLTRSEVRGGGRKPYKQKGTGRARQGSIRTPLRPG) are disordered. Basic residues predominate over residues 60-71 (GGRKPYKQKGTG).

The protein belongs to the universal ribosomal protein uL4 family. Part of the 50S ribosomal subunit.

Functionally, one of the primary rRNA binding proteins, this protein initially binds near the 5'-end of the 23S rRNA. It is important during the early stages of 50S assembly. It makes multiple contacts with different domains of the 23S rRNA in the assembled 50S subunit and ribosome. Forms part of the polypeptide exit tunnel. This is Large ribosomal subunit protein uL4 from Prochlorococcus marinus (strain AS9601).